A 217-amino-acid chain; its full sequence is tRNA (guanine-N(7)-)-methyltransferase (217 aa).

S-adenosyl-L-methionine-binding residues include glutamate 44, aspartate 69, aspartate 96, and aspartate 118. The active site involves aspartate 118. Lysine 122 lines the substrate pocket. An interaction with RNA region spans residues 124–129; the sequence is RHEKRR. Substrate-binding positions include aspartate 154 and 193 to 196; that span reads TEYE.

It belongs to the class I-like SAM-binding methyltransferase superfamily. TrmB family.

It carries out the reaction guanosine(46) in tRNA + S-adenosyl-L-methionine = N(7)-methylguanosine(46) in tRNA + S-adenosyl-L-homocysteine. The protein operates within tRNA modification; N(7)-methylguanine-tRNA biosynthesis. In terms of biological role, catalyzes the formation of N(7)-methylguanine at position 46 (m7G46) in tRNA. This is tRNA (guanine-N(7)-)-methyltransferase from Lactococcus lactis subsp. lactis (strain IL1403) (Streptococcus lactis).